An 835-amino-acid chain; its full sequence is MACSMANAVRPGLSDLPEGVDLSNPKEVRSLLIKLTHARKSTVYDTKIRRLHGVIVNSIMENYNSAEGELDMAITPLIPSHPDYAFLAGRVSAYMTQINTPKTFTDAVYGIQMAVGETNGFRSPMKPVKGGLSDEIVDFVNEHGARLDGMIDDVRDYSHNYMGITGLLNGVAIKVNKKLYERPQYVFMRVAMAMTDLSSETALEDIWQTYMLISGQCLSMASPVLFNGGTSSSNTASCFLLDMGDNMVSITKKVAQTMTLIAKNGGIGINFSKLRATGSKIGMAGKSSGIGGKLNLFDRVAQSVDQGENKRPGAIAGYLTDWHADMYDWLYSRYSGSGNEVNKRHVLNMGLVMSDLFMERVENDKEWSLFSPNDVVGLEELYGEKFVRAYRAHEANPKIKRTTVSARKLFSDIANMMWSTGEPYILFKDAVNERSNHKHLGTIKNSNLCCEIVQYCDTNEIAVCNLATICVSNFVNVETGEIDFEGIADAAGVACKGINNLIDKQNYDLGNEQLMRLADERTEEVVEVNGIKFDAKYNLVSYSNLKHRPQGIGMQGLHDVFMKLKIPYDSEMAFRLAALIQEAIYYGAVRESVKIAEEKGPYPSYYWDNNTHREGKLQFDFLEGFDRDRDLTHELFNWREVLKKFEKFGINNSVVTAQPPSASSSQLNDNVESIEAITSNRFTKGIKDGKFIIINKHLQKDLEDLGMWDAQMVGDIEANDGSIQNIERIPKNIREIYKTAREIDHKAVVKICAAIQPFIDQTISKNMFVPKNVDNPVQLIMENVILGHKMKLKTGMYYTRGIPAMKQQNFGKMNFQDKDIGKPVPELVDCEACSA.

Substrate contacts are provided by residues Ser-222, 237–238, Gly-266, 447–451, and 660–664; these read SC, NLCCE, and PSASS. Cys-238 and Cys-464 are joined by a disulfide. Asn-447 (proton acceptor) is an active-site residue. The active-site Cysteine radical intermediate is Cys-449. Glu-451 acts as the Proton acceptor in catalysis.

The protein belongs to the ribonucleoside diphosphate reductase large chain family. As to quaternary structure, heterotetramer composed of a homodimer of the large subunit (R1) and a homodimer of the small subunit (R2). Larger multisubunit protein complex are also active, composed of (R1)n(R2)n.

The enzyme catalyses a 2'-deoxyribonucleoside 5'-diphosphate + [thioredoxin]-disulfide + H2O = a ribonucleoside 5'-diphosphate + [thioredoxin]-dithiol. Ribonucleoside-diphosphate reductase holoenzyme provides the precursors necessary for viral DNA synthesis. Allows virus growth in non-dividing cells. Catalyzes the biosynthesis of deoxyribonucleotides from the corresponding ribonucleotides. The protein is Ribonucleoside-diphosphate reductase large subunit of Magallana gigas (Pacific oyster).